We begin with the raw amino-acid sequence, 348 residues long: tRNA N6-adenosine threonylcarbamoyltransferase (348 aa).

Fe cation contacts are provided by histidine 115 and histidine 119. Substrate is bound by residues 137-141 (LASGG), aspartate 170, glycine 183, and asparagine 281. Aspartate 309 serves as a coordination point for Fe cation.

The protein belongs to the KAE1 / TsaD family. Fe(2+) is required as a cofactor.

It is found in the cytoplasm. It carries out the reaction L-threonylcarbamoyladenylate + adenosine(37) in tRNA = N(6)-L-threonylcarbamoyladenosine(37) in tRNA + AMP + H(+). In terms of biological role, required for the formation of a threonylcarbamoyl group on adenosine at position 37 (t(6)A37) in tRNAs that read codons beginning with adenine. Is involved in the transfer of the threonylcarbamoyl moiety of threonylcarbamoyl-AMP (TC-AMP) to the N6 group of A37, together with TsaE and TsaB. TsaD likely plays a direct catalytic role in this reaction. The chain is tRNA N6-adenosine threonylcarbamoyltransferase from Methylobacterium sp. (strain 4-46).